The sequence spans 553 residues: General alpha-glucoside permease (553 aa).

Residues 1-21 (MSVDENQLENGQLLSSENEAS) are compositionally biased toward polar residues. Residues 1–26 (MSVDENQLENGQLLSSENEASSPFKE) form a disordered region. Residues 1–33 (MSVDENQLENGQLLSSENEASSPFKESIPSRSS) lie on the Cytoplasmic side of the membrane. Residues 34 to 54 (LYLIALTVSLLGVQLTWSVEL) traverse the membrane as a helical segment. The Extracellular portion of the chain corresponds to 55-72 (GYGTPYLFSLGLRKEWTS). A helical membrane pass occupies residues 73–93 (IIWIAGPLTGILIQPIAGILS). The Cytoplasmic portion of the chain corresponds to 94-111 (DRVNSRIGRRRPFMLCAS). A helical transmembrane segment spans residues 112–132 (LLGTFSLFLMGWAPDICLFIF). The Extracellular portion of the chain corresponds to 133 to 140 (SNEVLMKR). The chain crosses the membrane as a helical span at residues 141–161 (VTIVLATISIYLLDVAVNVVM). Over 162 to 186 (ASTRSLIVDSVRSDQQHEANSWAGR) the chain is Cytoplasmic. A helical membrane pass occupies residues 187–207 (MIGVGNVLGYLLGYLPLYRIF). At 208-216 (SFLNFTQLQ) the chain is on the extracellular side. A helical membrane pass occupies residues 217–237 (VFCVLASISLVLTVTITTIFV). Residues 238–280 (SERRFPPVEHEKSVAGEIFEFFTTMRQSITALPFTLKRICFVQ) are Cytoplasmic-facing. Residues 281–301 (FFAYFGWFPFLFYITTYVGIL) form a helical membrane-spanning segment. Topologically, residues 302–322 (YLRHAPKGHEEDWDMATRQGS) are extracellular. A helical transmembrane segment spans residues 323-343 (FALLLFAIISLAANTALPLLL). At 344 to 424 (EDTEDDEEDE…SKVQIKGLTL (81 aa)) the chain is on the cytoplasmic side. The disordered stretch occupies residues 368–399 (NDLGNIRTGTNTPRLGNLSETTSFRSENEPSR). Polar residues predominate over residues 374–392 (RTGTNTPRLGNLSETTSFR). The helical transmembrane segment at 425–445 (PILWLSSHVLFGVCMLSTIFL) threads the bilayer. At 446 to 452 (QTSWQAQ) the chain is on the extracellular side. A helical membrane pass occupies residues 453-473 (AMVAICGLSWACTLWIPYSLF). Topologically, residues 474–494 (SSEIGKLGLRESSGKMIGVHN) are cytoplasmic. Residues 495 to 515 (VFISAPQVLSTIIATIVFIQS) traverse the membrane as a helical segment. Over 516–521 (EGSHRD) the chain is Extracellular. The chain crosses the membrane as a helical span at residues 522–542 (IADNSIAWVLRIGGISAFLAA). The Cytoplasmic segment spans residues 543 to 553 (YQCRHLLPINF).

The protein belongs to the glycoside-pentoside-hexuronide (GPH) cation symporter transporter (TC 2.A.2.4) family.

The protein resides in the membrane. Its function is as follows. Responsible for the transport of maltose and sucrose into the cell, with the concomitant uptake of protons (symport system). In Schizosaccharomyces pombe (strain 972 / ATCC 24843) (Fission yeast), this protein is General alpha-glucoside permease (sut1).